We begin with the raw amino-acid sequence, 366 residues long: Flagellar P-ring protein (366 aa).

The N-terminal stretch at 1 to 20 (MVIKFLSALILLLVTTAAQA) is a signal peptide.

This sequence belongs to the FlgI family. The basal body constitutes a major portion of the flagellar organelle and consists of four rings (L,P,S, and M) mounted on a central rod.

It is found in the periplasm. The protein resides in the bacterial flagellum basal body. Assembles around the rod to form the L-ring and probably protects the motor/basal body from shearing forces during rotation. This Escherichia coli O1:K1 / APEC protein is Flagellar P-ring protein.